Consider the following 461-residue polypeptide: Nuclear distribution protein PAC1 (461 aa).

In terms of domain architecture, LisH spans 9–41 (QAEELHKSIIAYLTANNLLNTANTLRAELNLSE). WD repeat units follow at residues 114-155 (SHRD…RTIK), 157-197 (HTRA…KNIR), 201-248 (GHDH…CVRT), 251-290 (GHTAWVRDVYPSPDGRFLLSTGDDSTARLWDISVSNPESK), 312-355 (QYLS…LMTL), 357-396 (GHDNWIRALAFHPGGKYLFSVSDDRTLRCWDLSQEGKCIK), and 401-457 (AHER…MKLR).

This sequence belongs to the WD repeat LIS1/nudF family. In terms of assembly, self-associates. Interacts with NDL1 and dynein.

It localises to the cytoplasm. Its subcellular location is the cytoskeleton. It is found in the spindle pole. In terms of biological role, positively regulates the activity of the minus-end directed microtubule motor protein dynein. May enhance dynein-mediated microtubule sliding by targeting dynein to the microtubule plus end. Required for nuclear migration during vegetative growth as well as development. Required for retrograde early endosome (EE) transport from the hyphal tip. Required for localization of dynein to the mitotic spindle poles. Recruits additional proteins to the dynein complex at SPBs. The chain is Nuclear distribution protein PAC1 from Arthroderma otae (strain ATCC MYA-4605 / CBS 113480) (Microsporum canis).